A 287-amino-acid chain; its full sequence is MSDNLKIGLQYLTPKHALTRLAGKLASAKMGWLTTAVIKWFIKQYNVNMDEAKNPDPEAYSTFNNFFVRELEDGARPINEDDSVISHPADACVSQFGPIMDGKLVQAKGHVYSAQELLGGDEALAAEFMGGEFATLYLSPSDYHRVHMPCDATLRKMIYVPGDLFSVNPLTAENVPNLFARNERVVCIFDTEFGPMAQILVGATIVGSIETTWAETVTPPTGPAVKTWHYPLSGDDMICFKKGEEMGRFKLGSTVINLFAPNSIKFDDSMENGTPTRMGTPFAHIVK.

Catalysis depends on charge relay system; for autoendoproteolytic cleavage activity residues Asp-90, His-147, and Ser-253. Ser-253 (schiff-base intermediate with substrate; via pyruvic acid; for decarboxylase activity) is an active-site residue. Ser-253 bears the Pyruvic acid (Ser); by autocatalysis mark.

Belongs to the phosphatidylserine decarboxylase family. PSD-B subfamily. Prokaryotic type I sub-subfamily. As to quaternary structure, heterodimer of a large membrane-associated beta subunit and a small pyruvoyl-containing alpha subunit. The cofactor is pyruvate. In terms of processing, is synthesized initially as an inactive proenzyme. Formation of the active enzyme involves a self-maturation process in which the active site pyruvoyl group is generated from an internal serine residue via an autocatalytic post-translational modification. Two non-identical subunits are generated from the proenzyme in this reaction, and the pyruvate is formed at the N-terminus of the alpha chain, which is derived from the carboxyl end of the proenzyme. The autoendoproteolytic cleavage occurs by a canonical serine protease mechanism, in which the side chain hydroxyl group of the serine supplies its oxygen atom to form the C-terminus of the beta chain, while the remainder of the serine residue undergoes an oxidative deamination to produce ammonia and the pyruvoyl prosthetic group on the alpha chain. During this reaction, the Ser that is part of the protease active site of the proenzyme becomes the pyruvoyl prosthetic group, which constitutes an essential element of the active site of the mature decarboxylase.

The protein localises to the cell membrane. It catalyses the reaction a 1,2-diacyl-sn-glycero-3-phospho-L-serine + H(+) = a 1,2-diacyl-sn-glycero-3-phosphoethanolamine + CO2. Its pathway is phospholipid metabolism; phosphatidylethanolamine biosynthesis; phosphatidylethanolamine from CDP-diacylglycerol: step 2/2. Catalyzes the formation of phosphatidylethanolamine (PtdEtn) from phosphatidylserine (PtdSer). This Aliivibrio fischeri (strain ATCC 700601 / ES114) (Vibrio fischeri) protein is Phosphatidylserine decarboxylase proenzyme.